A 414-amino-acid chain; its full sequence is MANVQQGQKDKIVLAYSGGLDTSIILKWLQTERNYDVVTFTADLGQGDEVEEARVKALNTGAVAAYALDLREEFVRDYVFPMFRAAALYEGYYLLGTSIARPLIAKKLVEIAEKEGAVAVSHGATGKGNDQVRFEMTAYALKPDIVTVAPWRDWDFQGRADLETFAREHGIPVPTTKKDPWSTDANLLHISYEGGILEDPWAEPPAHMFKLTVSPEEAPDQPEYVEVEFENGDPVAIGGERLSPAALLAKANEIGGRNGVGRIDLVENRFVGMKSRGVYETPGGTLLYHARRAVESLTLDREVLHQRDALAPKYAELVYNGFWFAPEREALQVYIDHVARSVTGTARLKLYKGNCTVVGRRAPRSLYDKDLVSFEAGGDYNQHDAGAFIKLNALRMRVQARVDAKRTQQEVARV.

ATP is bound by residues 15 to 23 and A42; that span reads AYSGGLDTS. Positions 93 and 98 each coordinate L-citrulline. An ATP-binding site is contributed by G123. L-aspartate contacts are provided by T125, N129, and D130. N129 provides a ligand contact to L-citrulline. L-citrulline is bound by residues R133, S182, S191, E267, and Y279.

Belongs to the argininosuccinate synthase family. Type 1 subfamily. As to quaternary structure, homotetramer.

The protein localises to the cytoplasm. The enzyme catalyses L-citrulline + L-aspartate + ATP = 2-(N(omega)-L-arginino)succinate + AMP + diphosphate + H(+). It participates in amino-acid biosynthesis; L-arginine biosynthesis; L-arginine from L-ornithine and carbamoyl phosphate: step 2/3. The polypeptide is Argininosuccinate synthase (Deinococcus geothermalis (strain DSM 11300 / CIP 105573 / AG-3a)).